The chain runs to 62 residues: Bowman-Birk type proteinase inhibitor B7 (62 aa).

5 cysteine pairs are disulfide-bonded: cysteine 5/cysteine 59, cysteine 6/cysteine 23, cysteine 13/cysteine 21, cysteine 30/cysteine 37, and cysteine 34/cysteine 51.

The protein belongs to the Bowman-Birk serine protease inhibitor family. Expressed in bulb (at protein level).

Functionally, serine protease inhibitor. Inhibits trypsin (Ki = 65 nM) and weakly inhibits chymotrypsin (Ki = 295 nM). Does not inhibit bacterial subtilisin. The protein is Bowman-Birk type proteinase inhibitor B7 of Hyacinthus orientalis (Common hyacinth).